Consider the following 662-residue polypeptide: Probable quinol oxidase subunit 1 (662 aa).

The next 2 membrane-spanning stretches (helical) occupy residues 14-34 and 58-78; these read WMIT…IAVI and LMYL…ALLL. Position 102 (H102) interacts with Fe(II)-heme a. Transmembrane regions (helical) follow at residues 103–123, 140–160, 187–207, 228–248, 273–293, 311–331, 336–356, and 376–396; these read GVIM…NVVV, ISFW…IIGG, VAIQ…FVTI, FITT…LALM, FFWV…FGIY, MVWA…HHFF, GALI…PTGV, and MLFS…GVML. Residues H279, Y283, H328, and H329 each coordinate Cu cation. Positions 279–283 form a cross-link, 1'-histidyl-3'-tyrosine (His-Tyr); it reads HPEVY. H414 is a heme a3 binding site. Transmembrane regions (helical) follow at residues 415–435, 451–471, 492–512, 586–605, and 609–628; these read FHYT…IFWY, CFWL…ILGL, VIST…VVSI, THTG…FLIF, and IPAA…QSFV. Residue H416 participates in Fe(II)-heme a binding.

It belongs to the heme-copper respiratory oxidase family. It depends on Cu cation as a cofactor. Requires ferriheme a as cofactor. Heme A3. is required as a cofactor.

It localises to the cell membrane. It carries out the reaction 2 a quinol + O2 = 2 a quinone + 2 H2O. It functions in the pathway energy metabolism; oxidative phosphorylation. In terms of biological role, catalyzes quinol oxidation with the concomitant reduction of oxygen to water. This chain is Probable quinol oxidase subunit 1 (qoxB), found in Staphylococcus haemolyticus (strain JCSC1435).